We begin with the raw amino-acid sequence, 328 residues long: Malate dehydrogenase (328 aa).

An NAD(+)-binding site is contributed by 11 to 17 (GAAGQIG). Residues arginine 94 and arginine 100 each coordinate substrate. NAD(+) contacts are provided by residues asparagine 107, glutamine 114, and 131-133 (VGN). Positions 133 and 164 each coordinate substrate. The Proton acceptor role is filled by histidine 189.

Belongs to the LDH/MDH superfamily. MDH type 2 family.

It carries out the reaction (S)-malate + NAD(+) = oxaloacetate + NADH + H(+). Catalyzes the reversible oxidation of malate to oxaloacetate. In Xanthomonas euvesicatoria pv. vesicatoria (strain 85-10) (Xanthomonas campestris pv. vesicatoria), this protein is Malate dehydrogenase.